We begin with the raw amino-acid sequence, 258 residues long: Acyl-[acyl-carrier-protein]--UDP-N-acetylglucosamine O-acyltransferase (258 aa).

It belongs to the transferase hexapeptide repeat family. LpxA subfamily. In terms of assembly, homotrimer.

The protein resides in the cytoplasm. It carries out the reaction a (3R)-hydroxyacyl-[ACP] + UDP-N-acetyl-alpha-D-glucosamine = a UDP-3-O-[(3R)-3-hydroxyacyl]-N-acetyl-alpha-D-glucosamine + holo-[ACP]. Its pathway is glycolipid biosynthesis; lipid IV(A) biosynthesis; lipid IV(A) from (3R)-3-hydroxytetradecanoyl-[acyl-carrier-protein] and UDP-N-acetyl-alpha-D-glucosamine: step 1/6. Its function is as follows. Involved in the biosynthesis of lipid A, a phosphorylated glycolipid that anchors the lipopolysaccharide to the outer membrane of the cell. This chain is Acyl-[acyl-carrier-protein]--UDP-N-acetylglucosamine O-acyltransferase, found in Neisseria meningitidis serogroup A / serotype 4A (strain DSM 15465 / Z2491).